The following is a 487-amino-acid chain: Phosphoglucosamine mutase (487 aa).

Serine 134 (phosphoserine intermediate) is an active-site residue. Serine 134, aspartate 277, aspartate 279, and aspartate 281 together coordinate Mg(2+). A Phosphoserine modification is found at serine 134.

It belongs to the phosphohexose mutase family. The cofactor is Mg(2+). In terms of processing, activated by phosphorylation.

The catalysed reaction is alpha-D-glucosamine 1-phosphate = D-glucosamine 6-phosphate. Functionally, catalyzes the conversion of glucosamine-6-phosphate to glucosamine-1-phosphate. The sequence is that of Phosphoglucosamine mutase from Gloeothece citriformis (strain PCC 7424) (Cyanothece sp. (strain PCC 7424)).